The following is a 179-amino-acid chain: MSLKNRYRETIRPKLLKDLGFSNLHQVPKVVKINVNRGLGEAAQNSKALEASLSEVSTITGQKALVTRAKKAIAGFKIRQGMPIGCAVTLRGERMYAFLERLINLALPRIRDFRGVSPKSFDGRGNFTLGVKEQLIFPEISFDKIDAIRGMDITIVTSARTDEEGRALLKEMGMPFRSN.

The protein belongs to the universal ribosomal protein uL5 family. Part of the 50S ribosomal subunit; part of the 5S rRNA/L5/L18/L25 subcomplex. Contacts the 5S rRNA and the P site tRNA. Forms a bridge to the 30S subunit in the 70S ribosome.

This is one of the proteins that bind and probably mediate the attachment of the 5S RNA into the large ribosomal subunit, where it forms part of the central protuberance. In the 70S ribosome it contacts protein S13 of the 30S subunit (bridge B1b), connecting the 2 subunits; this bridge is implicated in subunit movement. Contacts the P site tRNA; the 5S rRNA and some of its associated proteins might help stabilize positioning of ribosome-bound tRNAs. The chain is Large ribosomal subunit protein uL5 from Prochlorococcus marinus (strain SARG / CCMP1375 / SS120).